The sequence spans 790 residues: PAN2-PAN3 deadenylation complex subunit PAN3 (790 aa).

2 disordered regions span residues 166–191 (IAQQQPQHPQKQQQHPPSVGGGAVSA) and 235–259 (AMISGAGPGEKSPPHGMTPHGASPI). The segment covering 168 to 191 (QQQPQHPQKQQQHPPSVGGGAVSA) has biased composition (low complexity). The interval 369 to 655 (DAAEAAQHAL…SVTDLMPMIG (287 aa)) is pseudokinase domain. Residues Arg423, 472–479 (DYHPGSQT), and 552–553 (TK) each bind ATP. The stretch at 656-694 (ARFYTQLDALQSKIDMQEDELAKEMENGRLYRILVKLNS) forms a coiled coil. A knob domain region spans residues 695–790 (INERPDFNLD…FSELMSSAAN (96 aa)).

The protein belongs to the protein kinase superfamily. PAN3 family. Homodimer. Forms a heterotrimer with a catalytic subunit PAN2 to form the poly(A)-nuclease (PAN) deadenylation complex. Interacts (via PAM-2 motif) with poly(A)-binding protein (via PABC domain), conferring substrate specificity of the enzyme complex. Interacts with the GW182 family protein gw. Interacts with Gyf.

Its subcellular location is the cytoplasm. The protein resides in the P-body. Its function is as follows. Regulatory subunit of the poly(A)-nuclease (PAN) deadenylation complex, one of two cytoplasmic mRNA deadenylases involved in general and miRNA-mediated mRNA turnover. PAN specifically shortens poly(A) tails of RNA and the activity is stimulated by poly(A)-binding protein (PABP). PAN deadenylation is followed by rapid degradation of the shortened mRNA tails by the CCR4-NOT complex. Deadenylated mRNAs are then degraded by two alternative mechanisms, namely exosome-mediated 3'-5' exonucleolytic degradation, or deadenylation-dependent mRNA decaping and subsequent 5'-3' exonucleolytic degradation by XRN1. PAN3 acts as a positive regulator for PAN activity, recruiting the catalytic subunit PAN2 to mRNA via its interaction with RNA and PABP, and to miRNA targets via its interaction with GW182 family proteins. In Drosophila melanogaster (Fruit fly), this protein is PAN2-PAN3 deadenylation complex subunit PAN3.